The following is a 77-amino-acid chain: DinI-like protein in retron Ec67 (77 aa).

Belongs to the DinI family.

The polypeptide is DinI-like protein in retron Ec67 (Escherichia coli).